We begin with the raw amino-acid sequence, 243 residues long: Transmembrane protein 174 (243 aa).

2 consecutive transmembrane segments (helical) span residues 40-60 (LLFS…MGWI) and 73-93 (LLGP…VCKF).

As to quaternary structure, interacts with SLC34A1; regulates SLC34A1 internalization by PTH and FGF23. Kidney specific. Expressed in renal primary proximal tubule cells.

The protein resides in the endoplasmic reticulum membrane. It is found in the apical cell membrane. Its function is as follows. Regulator of plasma phosphate homeostasis. Decreases serum inorganic phosphate (Pi) uptake by regulating the sodium-phosphate cotransporter SLC34A1 trafficking by PTH and FGF23 in the kidney. The chain is Transmembrane protein 174 (Tmem174) from Mus musculus (Mouse).